A 103-amino-acid polypeptide reads, in one-letter code: Small ribosomal subunit protein uS10 (103 aa).

The protein belongs to the universal ribosomal protein uS10 family. In terms of assembly, part of the 30S ribosomal subunit.

Involved in the binding of tRNA to the ribosomes. The protein is Small ribosomal subunit protein uS10 of Saccharophagus degradans (strain 2-40 / ATCC 43961 / DSM 17024).